Consider the following 296-residue polypeptide: 4-hydroxy-tetrahydrodipicolinate synthase (296 aa).

Residue T49 coordinates pyruvate. Y137 acts as the Proton donor/acceptor in catalysis. The active-site Schiff-base intermediate with substrate is K165. I208 serves as a coordination point for pyruvate.

Belongs to the DapA family. As to quaternary structure, homotetramer; dimer of dimers.

The protein localises to the cytoplasm. The catalysed reaction is L-aspartate 4-semialdehyde + pyruvate = (2S,4S)-4-hydroxy-2,3,4,5-tetrahydrodipicolinate + H2O + H(+). Its pathway is amino-acid biosynthesis; L-lysine biosynthesis via DAP pathway; (S)-tetrahydrodipicolinate from L-aspartate: step 3/4. Its function is as follows. Catalyzes the condensation of (S)-aspartate-beta-semialdehyde [(S)-ASA] and pyruvate to 4-hydroxy-tetrahydrodipicolinate (HTPA). The sequence is that of 4-hydroxy-tetrahydrodipicolinate synthase from Ehrlichia canis (strain Jake).